A 78-amino-acid polypeptide reads, in one-letter code: Large ribosomal subunit protein bL28 (78 aa).

The interval 1–29 is disordered; that stretch reads MSAHCQVTGRQPSFGKSVSHSHRRTSRRW.

It belongs to the bacterial ribosomal protein bL28 family.

The protein is Large ribosomal subunit protein bL28 of Corynebacterium efficiens (strain DSM 44549 / YS-314 / AJ 12310 / JCM 11189 / NBRC 100395).